The sequence spans 100 residues: uncharacterized protein (100 aa).

A run of 2 helical transmembrane segments spans residues 1-21 and 54-74; these read MLVL…YKVK and MILF…VIGA.

The protein localises to the cell membrane. This is an uncharacterized protein from Bacillus subtilis (strain 168).